Consider the following 238-residue polypeptide: Probable transcriptional regulatory protein LACR_0237 (238 aa).

This sequence belongs to the TACO1 family. YeeN subfamily.

The protein resides in the cytoplasm. This chain is Probable transcriptional regulatory protein LACR_0237, found in Lactococcus lactis subsp. cremoris (strain SK11).